Consider the following 364-residue polypeptide: UDP-N-acetylglucosamine--N-acetylmuramyl-(pentapeptide) pyrophosphoryl-undecaprenol N-acetylglucosamine transferase 1 (364 aa).

Residues 10-12 (TGG), N124, S195, I250, and Q295 each bind UDP-N-acetyl-alpha-D-glucosamine.

The protein belongs to the glycosyltransferase 28 family. MurG subfamily.

It localises to the cell membrane. The enzyme catalyses di-trans,octa-cis-undecaprenyl diphospho-N-acetyl-alpha-D-muramoyl-L-alanyl-D-glutamyl-meso-2,6-diaminopimeloyl-D-alanyl-D-alanine + UDP-N-acetyl-alpha-D-glucosamine = di-trans,octa-cis-undecaprenyl diphospho-[N-acetyl-alpha-D-glucosaminyl-(1-&gt;4)]-N-acetyl-alpha-D-muramoyl-L-alanyl-D-glutamyl-meso-2,6-diaminopimeloyl-D-alanyl-D-alanine + UDP + H(+). The protein operates within cell wall biogenesis; peptidoglycan biosynthesis. Its function is as follows. Cell wall formation. Catalyzes the transfer of a GlcNAc subunit on undecaprenyl-pyrophosphoryl-MurNAc-pentapeptide (lipid intermediate I) to form undecaprenyl-pyrophosphoryl-MurNAc-(pentapeptide)GlcNAc (lipid intermediate II). This Bacillus anthracis protein is UDP-N-acetylglucosamine--N-acetylmuramyl-(pentapeptide) pyrophosphoryl-undecaprenol N-acetylglucosamine transferase 1.